A 357-amino-acid chain; its full sequence is MFSREEVRASRPTKEMKMIFDVLMTFPYFAVHVPSKNILITPKGTVEIPENYQNYPILAIFYVKYLMKKNPYDLLPSTVNWPEPYVVVNTITKRFQDHKLFANKNADVYVERLQNAIASGIKIPESKKNERLGQPKKTKNVTKEIEETFIDATNARKELDEYFRKLQDGTLTGDLEGGLCKVKTLISCKALFGGHTQELQFMATNVRKVWIGEIVCGMVSNKNAIDDNDLEEEERNASGEQTTTAREESEALDTTSNGLDALNTQINAIETEESFWEAIRALHNELRTSPTQLEECRKAAVFLLGHKKILQTFTKQKDTARALFYINLKECLGTSWNLEYTEASDARKMAIKGELQN.

The disordered stretch occupies residues 226-257 (DDNDLEEEERNASGEQTTTAREESEALDTTSN).

Plasmid partition require REP1, REP2, and a cis-acting DNA sequence (known as STB). REP1 may act by intercalating in the yeast nuclear matrix and binding STB either directly or via REP2. The protein is Trans-acting factor B (B) of Zygosaccharomyces bailii.